The chain runs to 336 residues: Dihydroorotate dehydrogenase (quinone) (336 aa).

Residues 62 to 66 and T86 each bind FMN; that span reads AGLDK. K66 lines the substrate pocket. 111–115 provides a ligand contact to substrate; sequence NRMGF. 2 residues coordinate FMN: N139 and N172. Position 172 (N172) interacts with substrate. The active-site Nucleophile is the S175. Substrate is bound at residue N177. The FMN site is built by K217 and T245. Substrate is bound at residue 246 to 247; sequence NT. FMN contacts are provided by residues G268, G297, and 318-319; that span reads YS.

The protein belongs to the dihydroorotate dehydrogenase family. Type 2 subfamily. Monomer. FMN is required as a cofactor.

The protein localises to the cell membrane. The catalysed reaction is (S)-dihydroorotate + a quinone = orotate + a quinol. It functions in the pathway pyrimidine metabolism; UMP biosynthesis via de novo pathway; orotate from (S)-dihydroorotate (quinone route): step 1/1. In terms of biological role, catalyzes the conversion of dihydroorotate to orotate with quinone as electron acceptor. This chain is Dihydroorotate dehydrogenase (quinone), found in Proteus mirabilis (strain HI4320).